Here is a 70-residue protein sequence, read N- to C-terminus: uncharacterized protein (70 aa).

This is an uncharacterized protein from Methanocaldococcus jannaschii (strain ATCC 43067 / DSM 2661 / JAL-1 / JCM 10045 / NBRC 100440) (Methanococcus jannaschii).